The primary structure comprises 163 residues: UPF0262 protein RPE_4483 (163 aa).

The protein belongs to the UPF0262 family.

This chain is UPF0262 protein RPE_4483, found in Rhodopseudomonas palustris (strain BisA53).